A 391-amino-acid polypeptide reads, in one-letter code: Immunoglobulin heavy constant alpha 2 (391 aa).

Over 1–357 the chain is Extracellular; the sequence is ASPTSPKVFP…TPGANLWPTT (357 aa). 3 consecutive Ig-like domains span residues 6–98, 112–207, and 215–317; these read PKVF…QDVT, PRLS…ANIT, and PEVH…KTID. Cysteine 26 and cysteine 85 are oxidised to a cystine. Residue asparagine 47 is glycosylated (N-linked (GlcNAc...) asparagine). Asparagine 92 carries an N-linked (GlcNAc...) (complex) asparagine glycan. 2 cysteine pairs are disulfide-bonded: cysteine 110/cysteine 167 and cysteine 134/cysteine 191. Residue asparagine 131 is glycosylated (N-linked (GlcNAc...) asparagine). N-linked (GlcNAc...) (complex) asparagine glycosylation is present at asparagine 205. Cysteines 237 and 300 form a disulfide. Aspartate 327 carries N-linked (GlcNAc...) (complex) asparagine glycosylation. Residues 358–379 traverse the membrane as a helical segment; the sequence is ITFLTLFLLSLFYSTALTVTSV. Topologically, residues 380–391 are cytoplasmic; sequence RGPSGKREGPQY.

In terms of assembly, immunoglobulins are composed of two identical heavy chains and two identical light chains; disulfide-linked. Monomeric or polymeric. Part of the secretory IgA (sIgA) complex that consists of two, four or five IgA monomers, and two additional non-Ig polypeptides, namely the JCHAIN and the secretory component (the proteolytic product of PIGR).

The protein resides in the secreted. It localises to the cell membrane. Constant region of immunoglobulin heavy chains. Immunoglobulins, also known as antibodies, are membrane-bound or secreted glycoproteins produced by B lymphocytes. In the recognition phase of humoral immunity, the membrane-bound immunoglobulins serve as receptors which, upon binding of a specific antigen, trigger the clonal expansion and differentiation of B lymphocytes into immunoglobulins-secreting plasma cells. Secreted immunoglobulins mediate the effector phase of humoral immunity, which results in the elimination of bound antigens. The antigen binding site is formed by the variable domain of one heavy chain, together with that of its associated light chain. Thus, each immunoglobulin has two antigen binding sites with remarkable affinity for a particular antigen. The variable domains are assembled by a process called V-(D)-J rearrangement and can then be subjected to somatic hypermutations which, after exposure to antigen and selection, allow affinity maturation for a particular antigen. Ig alpha is the major immunoglobulin class in body secretions. This Homo sapiens (Human) protein is Immunoglobulin heavy constant alpha 2.